The following is a 503-amino-acid chain: UDP-N-acetylmuramoylalanine--D-glutamate ligase (503 aa).

129–135 (GTNGKTT) lines the ATP pocket.

This sequence belongs to the MurCDEF family.

The protein resides in the cytoplasm. It catalyses the reaction UDP-N-acetyl-alpha-D-muramoyl-L-alanine + D-glutamate + ATP = UDP-N-acetyl-alpha-D-muramoyl-L-alanyl-D-glutamate + ADP + phosphate + H(+). It functions in the pathway cell wall biogenesis; peptidoglycan biosynthesis. Cell wall formation. Catalyzes the addition of glutamate to the nucleotide precursor UDP-N-acetylmuramoyl-L-alanine (UMA). In Burkholderia orbicola (strain MC0-3), this protein is UDP-N-acetylmuramoylalanine--D-glutamate ligase.